The primary structure comprises 218 residues: Insulin-induced gene 2 protein (218 aa).

Residues 1 to 21 (MGETDNAPRGPPSFLPHKMNL) are Cytoplasmic-facing. A helical transmembrane segment spans residues 22–44 (LLRGLLLFLIGVFLALVLNLLQV). Topologically, residues 45 to 63 (QRNVTLFPPDVLSSLFSSA) are lumenal. A helical transmembrane segment spans residues 64-81 (WWVPLCCGTAAAAIGLLY). At 82–96 (PCIDRHLGEPHKFKR) the chain is on the cytoplasmic side. A helical membrane pass occupies residues 97–119 (EWSSVMRCVAVFVGINHASAKVD). Over 120–122 (FAN) the chain is Lumenal. Residues 123–141 (NTQLSLTLAALSIGLWWTF) form a helical membrane-spanning segment. At 142 to 146 (DRSRS) the chain is on the cytoplasmic side. The helical transmembrane segment at 147-168 (GLGLGIGISFFATVVSQLLVYN) threads the bilayer. The Lumenal portion of the chain corresponds to 169–182 (GVYEYTAPDFLYVR). Residues 183-200 (SWLPCIFFAGGITMGNIG) traverse the membrane as a helical segment. Residues 201–218 (RQLEMYERLALVEKSHRD) are Cytoplasmic-facing. The KxHxx motif lies at 212–218 (VEKSHRD).

This sequence belongs to the INSIG family. As to quaternary structure, interacts with scap; interaction is direct and only takes place in the presence of sterols; it prevents interaction between scap and the coat protein complex II (COPII). Associates with the SCAP-SREBP complex; association is mediated via its interaction with scap and only takes place in the presence of sterols.

The protein localises to the endoplasmic reticulum membrane. Oxysterol-binding protein that mediates feedback control of cholesterol synthesis by controlling both endoplasmic reticulum to Golgi transport of scap and degradation of hmgcr. Acts as a negative regulator of cholesterol biosynthesis by mediating the retention of the SCAP-SREBP complex in the endoplasmic reticulum, thereby blocking the processing of sterol regulatory element-binding proteins (SREBPs). Binds oxysterol, including 22-hydroxycholesterol, 24-hydroxycholesterol, 25-hydroxycholesterol and 27-hydroxycholesterol, regulating interaction with scap and retention of the SCAP-SREBP complex in the endoplasmic reticulum. In presence of oxysterol, interacts with scap, retaining the SCAP-SREBP complex in the endoplasmic reticulum, thereby preventing scap from escorting SREBPs to the Golgi. Sterol deprivation reduce oxysterol-binding, disrupting the interaction between insig2 and scap, thereby promoting Golgi transport of the SCAP-SREBP complex, followed by processing and nuclear translocation of SREBPs. Also regulates cholesterol synthesis by regulating degradation of hmgcr. The sequence is that of Insulin-induced gene 2 protein from Xenopus tropicalis (Western clawed frog).